The sequence spans 395 residues: uncharacterized protein (395 aa).

The disordered stretch occupies residues 115–144 (TKPPTEGGPEKDQSSPSQTQAAPQGPSTAS). A compositionally biased stretch (low complexity) spans 128 to 141 (SSPSQTQAAPQGPS).

This is an uncharacterized protein from Homo sapiens (Human).